The primary structure comprises 604 residues: MADPKGSTSKEGFNDWCILEAECSDIDNDLEQLFDQDTDSDISDLLDENDVEQGNSRELFHLQECQESEEQLQKLKRKYLSPKAVAQLSPRFESISLSPQQKSKRRLFAEQDSGLELTLTNEAEDVSPEVEVPALNSQPVAEGQSGDIDISYTALLRASNNKAILMAKFKEAFGVGFNDLTRQFKSYKTCCNAWVISVYAVHDDLIESSKQLLQQHCDYVWIRGIGAMSLFLVCFKAGKNRGTVHKLMTTMLNVHEKQILSEPPKLRNVAAALFWYKGSMGSGVFTYGSYPDWIAHQTILGHQSAEASTFDLSDMVQWAFDNNYLDEADIAYQYAKLAPDNSNAVAWLAHNNQAKFVRECASMVRFYKKGQMKEMSMSEWIYTKIHEVEGEGQWSTIVQFLRYQQVNFIMFLAALKDLLHSVPKRNCILFYGPPNTGKSAFTMSLIKVLKGRVLSFCNSKSQFWLQPLSECKIALLDDVTDPCWVYMDTYLRNGLDGHYVSLDCKHKAPMQTKFPALLLTSNINVHNEVNYRYLHSRIKGFEFPNPFPMKADNTPQFDLTDQSWKSFFTRLWHQLDLSDQEDEGENGESQRAFQCSTRSANEHL.

The short motif at 76 to 78 is the Nuclear localization signal element; it reads KRK. A phosphoserine; by host mark is found at serine 81 and serine 89. Residues 144–307 are DNA-binding region; it reads QSGDIDISYT…TILGHQSAEA (164 aa). Residues 406–556 form the SF3 helicase domain; that stretch reads VNFIMFLAAL…FPMKADNTPQ (151 aa). Position 432–439 (432–439) interacts with ATP; that stretch reads GPPNTGKS. A Glycyl lysine isopeptide (Lys-Gly) (interchain with G-Cter in SUMO) cross-link involves residue lysine 513. Positions 579–604 are disordered; that stretch reads DQEDEGENGESQRAFQCSTRSANEHL. Residues 587-604 show a composition bias toward polar residues; that stretch reads GESQRAFQCSTRSANEHL.

This sequence belongs to the papillomaviridae E1 protein family. Can form hexamers. Interacts with E2 protein; this interaction increases E1 DNA binding specificity. Interacts with host DNA polymerase subunit POLA2. Interacts with host single stranded DNA-binding protein RPA1. Interacts with host TOP1; this interaction stimulates the enzymatic activity of TOP1. Phosphorylated. Post-translationally, sumoylated.

The protein resides in the host nucleus. The catalysed reaction is Couples ATP hydrolysis with the unwinding of duplex DNA by translocating in the 3'-5' direction.. It catalyses the reaction ATP + H2O = ADP + phosphate + H(+). In terms of biological role, ATP-dependent DNA 3'-5' helicase required for initiation of viral DNA replication. It forms a complex with the viral E2 protein. The E1-E2 complex binds to the replication origin which contains binding sites for both proteins. During the initial step, a dimer of E1 interacts with a dimer of protein E2 leading to a complex that binds the viral origin of replication with high specificity. Then, a second dimer of E1 displaces the E2 dimer in an ATP-dependent manner to form the E1 tetramer. Following this, two E1 monomers are added to each half of the site, which results in the formation of two E1 trimers on the viral ori. Subsequently, two hexamers will be created. The double hexamer acts as a bi-directional helicase machinery and unwinds the viral DNA and then recruits the host DNA polymerase to start replication. This chain is Replication protein E1, found in Human papillomavirus 25.